We begin with the raw amino-acid sequence, 237 residues long: Ribosomal RNA small subunit methyltransferase G (237 aa).

S-adenosyl-L-methionine contacts are provided by residues Gly-78, Phe-83, 129-130 (AE), and Arg-148. Residues 218 to 237 (KKETPNKYPRKAGMPNKRPL) form a disordered region.

This sequence belongs to the methyltransferase superfamily. RNA methyltransferase RsmG family.

The protein resides in the cytoplasm. In terms of biological role, specifically methylates the N7 position of a guanine in 16S rRNA. This Streptococcus pneumoniae serotype 19F (strain G54) protein is Ribosomal RNA small subunit methyltransferase G.